We begin with the raw amino-acid sequence, 881 residues long: MMKELHPELRENVRLLGELLGQSIRYHLGDEIFNKIEKIRIAAKADRNAEISQRKQLKEVLSGLNDEELAPVARAFNQFLNLTNIAEQYHIVRRRAPASELVDNRLDTIEVVFDRLIGQGVSKDKFFAQLADLNLEFVLTAHPTEITRRTLIQKYDQISECLESLDRSDLLDEEYAKIVERLRRLITEAWHTDEIRYERPTAVDEAKWGFAVIENSLWQAVPDFMRQMDAALLERFGEGLPINVNPVRFASWMGGDRDGNPNVTSEVTREVFLLSRWMAADLYLRDIEALRSELSMTACNGELARASGQSREPYRKILAKLRSRLEATRAWAAEALDSTKKPAAEVLLNNAELIEPLMVCYRSLRDCGMEVIANGPLLDVIRRAQCFGLQLVRLDIRQDSERHSDVMKEICAYLGIGDYSQWTEEEKQAFLIRELEGRRPLLPKEWPASAEAREVLDTCRVVAMQPPEGLASYVISMASDPSDVLTVILLLRESGMRHHIPIAPLFETLSDLQGAADSIGRLLDLPWYREYIGGKQEVMIGYSDSAKDAGQMAAAWAQYQAQEALVKVAAKHDVKLTLFHGRGGTVGRGGGPANRAILSQPPGSVAGNFRITEQGEMIRFKFGQPKVAKQSFNLYLGAVLEASLVPPPEPEPAWREMMDKLSHLAVNSYREVVRERPGFVEYFRSATPEQELGKLALGSRPARRKASGGVESLRAIPWIFAWTQMRLMLPAWLGSDTALQTAVDDGGADTLKAMLTGWPFFETHVDMLEMVLSKVDPEIARFYEERLVKPELHPLGDELRRRAGCAVRLINELKGQDELLLDNPVFMHSLQVRNPYTDPLHFLQVELLVRDRAEGETNKETVEKALKVTMAGVAAGMRNTG.

Residues H142 and K547 contribute to the active site.

This sequence belongs to the PEPCase type 1 family. Mg(2+) is required as a cofactor.

It catalyses the reaction oxaloacetate + phosphate = phosphoenolpyruvate + hydrogencarbonate. Functionally, forms oxaloacetate, a four-carbon dicarboxylic acid source for the tricarboxylic acid cycle. This chain is Phosphoenolpyruvate carboxylase, found in Hahella chejuensis (strain KCTC 2396).